The following is a 349-amino-acid chain: Protein MULTIPLE CHLOROPLAST DIVISION SITE 1 (349 aa).

Residues 1–52 constitute a chloroplast transit peptide; the sequence is MASIDSLQFHSLCNLQSSIGRAKLQNPSSLVIFRRRPVNLNWVQFETKGSFV. Residues 53 to 116 are Chloroplast intermembrane-facing; that stretch reads CKAIGDSSTP…VVFLMKKCSV (64 aa). A helical transmembrane segment spans residues 117-139; it reads NSIWIGVCITATVLVAAIRAYVV. At 140 to 349 the chain is on the stromal side; sequence RKSRDNQRAG…NSSSEETHKS (210 aa). The interval 315–349 is disordered; the sequence is QRPYKFSAKLEGENIQKNSQENHTGNSSSEETHKS. The span at 329-343 shows a compositional bias: polar residues; it reads IQKNSQENHTGNSSS.

Interacts with MIND1. Interacts with ARC6 in the chloroplast stroma and binds to FtsZ2-1 in an ARC6-dependent manner.

It localises to the plastid. Its subcellular location is the chloroplast inner membrane. Required for chloroplast division. Together with MIND1 and ARC3, regulates FtsZ ring positioning in chloroplasts in an ARC6-dependent manner. Determines the site of chloroplast division in concert with MIND1. Not directly involved in ring formation, but required for MIND1 and MINE1 localization to regulate FtsZ ring formation during plastidial constriction. The sequence is that of Protein MULTIPLE CHLOROPLAST DIVISION SITE 1 from Arabidopsis thaliana (Mouse-ear cress).